A 334-amino-acid polypeptide reads, in one-letter code: D-fructose 1,6-bisphosphatase class 2/sedoheptulose 1,7-bisphosphatase (334 aa).

Asp-33, Glu-57, Asp-85, and Glu-88 together coordinate Mn(2+). Residues 88–90 (EGT), Tyr-119, 164–166 (RAR), and 186–188 (DGD) each bind substrate. Glu-213 provides a ligand contact to Mn(2+).

Belongs to the FBPase class 2 family. In terms of assembly, homotetramer. It depends on Mn(2+) as a cofactor.

It catalyses the reaction beta-D-fructose 1,6-bisphosphate + H2O = beta-D-fructose 6-phosphate + phosphate. The enzyme catalyses D-sedoheptulose 1,7-bisphosphate + H2O = D-sedoheptulose 7-phosphate + phosphate. Its pathway is carbohydrate biosynthesis; Calvin cycle. Its function is as follows. Catalyzes the hydrolysis of fructose 1,6-bisphosphate (Fru 1,6-P2) and sedoheptulose 1,7-bisphosphate (Sed 1,7-P2) to fructose 6-phosphate and sedoheptulose 7-phosphate, respectively. The protein is D-fructose 1,6-bisphosphatase class 2/sedoheptulose 1,7-bisphosphatase of Synechococcus sp. (strain CC9902).